Here is a 416-residue protein sequence, read N- to C-terminus: Meiotically up-regulated protein PB1A10.08 (416 aa).

Its subcellular location is the cytoplasm. May have a role in meiosis and sporulation. The protein is Meiotically up-regulated protein PB1A10.08 of Schizosaccharomyces pombe (strain 972 / ATCC 24843) (Fission yeast).